The primary structure comprises 381 residues: Lipid-A-disaccharide synthase (381 aa).

It belongs to the LpxB family.

The enzyme catalyses a lipid X + a UDP-2-N,3-O-bis[(3R)-3-hydroxyacyl]-alpha-D-glucosamine = a lipid A disaccharide + UDP + H(+). Its pathway is bacterial outer membrane biogenesis; LPS lipid A biosynthesis. Its function is as follows. Condensation of UDP-2,3-diacylglucosamine and 2,3-diacylglucosamine-1-phosphate to form lipid A disaccharide, a precursor of lipid A, a phosphorylated glycolipid that anchors the lipopolysaccharide to the outer membrane of the cell. This is Lipid-A-disaccharide synthase from Solibacter usitatus (strain Ellin6076).